Here is a 310-residue protein sequence, read N- to C-terminus: Protoheme IX farnesyltransferase 2 (310 aa).

9 consecutive transmembrane segments (helical) span residues 25-45 (PGII…AAKG), 49-69 (LVLM…GCAI), 98-118 (HVLL…ALFT), 121-141 (LALL…SLYM), 145-165 (SVYG…VGYC), 176-196 (VILL…IAIF), 222-242 (IVLY…AGYT), 245-265 (AFMA…LKGY), and 277-297 (QVFG…ALDF).

It belongs to the UbiA prenyltransferase family. Protoheme IX farnesyltransferase subfamily.

Its subcellular location is the cell inner membrane. It carries out the reaction heme b + (2E,6E)-farnesyl diphosphate + H2O = Fe(II)-heme o + diphosphate. It participates in porphyrin-containing compound metabolism; heme O biosynthesis; heme O from protoheme: step 1/1. In terms of biological role, converts heme B (protoheme IX) to heme O by substitution of the vinyl group on carbon 2 of heme B porphyrin ring with a hydroxyethyl farnesyl side group. In Shewanella sp. (strain ANA-3), this protein is Protoheme IX farnesyltransferase 2.